Consider the following 388-residue polypeptide: Succinate--CoA ligase [ADP-forming] subunit beta (388 aa).

Residues 9-244 form the ATP-grasp domain; it reads KQLFAEYGLP…PSQDDPREAH (236 aa). Residues lysine 46, 53–55, glutamate 99, threonine 102, and glutamate 107 contribute to the ATP site; that span reads GRG. Mg(2+) contacts are provided by asparagine 199 and aspartate 213. Residues asparagine 264 and 321–323 each bind substrate; that span reads GIV.

The protein belongs to the succinate/malate CoA ligase beta subunit family. In terms of assembly, heterotetramer of two alpha and two beta subunits. Requires Mg(2+) as cofactor.

The enzyme catalyses succinate + ATP + CoA = succinyl-CoA + ADP + phosphate. It carries out the reaction GTP + succinate + CoA = succinyl-CoA + GDP + phosphate. The protein operates within carbohydrate metabolism; tricarboxylic acid cycle; succinate from succinyl-CoA (ligase route): step 1/1. Its function is as follows. Succinyl-CoA synthetase functions in the citric acid cycle (TCA), coupling the hydrolysis of succinyl-CoA to the synthesis of either ATP or GTP and thus represents the only step of substrate-level phosphorylation in the TCA. The beta subunit provides nucleotide specificity of the enzyme and binds the substrate succinate, while the binding sites for coenzyme A and phosphate are found in the alpha subunit. The chain is Succinate--CoA ligase [ADP-forming] subunit beta from Pseudomonas syringae pv. tomato (strain ATCC BAA-871 / DC3000).